The chain runs to 219 residues: Glutathione S-transferase-like protein LUC7 (219 aa).

A GST N-terminal domain is found at P3–E84. Positions D90 to E219 constitute a GST C-terminal domain.

Belongs to the GST superfamily.

Its function is as follows. Glutathione S-transferase-like protein; part of the gene cluster that mediates the biosynthesis of the mycotoxin lucilactaene and the lucilactaene-related compound NG-391 that act as cell cycle inhibitors with potent growth inhibitory activity against malarial parasites, moderate growth inhibitory activity against cancer cells, and no activity against bacteria and fungi. Within the cluster, LUC7 and LUC8 encode proteins which are not commonly involved in the biosynthesis of secondary metabolites and are not essential for lucilactaene biosynthesis. The chain is Glutathione S-transferase-like protein LUC7 from Fusarium sp.